Reading from the N-terminus, the 46-residue chain is Bottromycin D (46 aa).

A propeptide spanning residues 10-46 (MTADFLNDDPNNAELSSLEMEELESWGAWSDDTDQSV) is cleaved from the precursor.

The precursor peptide is first ribosomally synthesized and then highly tailored by specific enzymes to yield the final natural product. These modifications include several methylations, cyclization and the formation of t-Leu and Thia-beta-Ala residues.

It localises to the secreted. Bottromycin D is a ribosomally synthesized and post-translationally modified peptide (RiPP) that displays antibiotic activity against methicillin-resistant S.aureus (MRSA). This Streptomyces sp protein is Bottromycin D.